A 259-amino-acid polypeptide reads, in one-letter code: Deoxyribose-phosphate aldolase (259 aa).

Asp-102 (proton donor/acceptor) is an active-site residue. Lys-167 acts as the Schiff-base intermediate with acetaldehyde in catalysis. Residue Lys-201 is the Proton donor/acceptor of the active site.

This sequence belongs to the DeoC/FbaB aldolase family. DeoC type 2 subfamily.

Its subcellular location is the cytoplasm. It carries out the reaction 2-deoxy-D-ribose 5-phosphate = D-glyceraldehyde 3-phosphate + acetaldehyde. Its pathway is carbohydrate degradation; 2-deoxy-D-ribose 1-phosphate degradation; D-glyceraldehyde 3-phosphate and acetaldehyde from 2-deoxy-alpha-D-ribose 1-phosphate: step 2/2. In terms of biological role, catalyzes a reversible aldol reaction between acetaldehyde and D-glyceraldehyde 3-phosphate to generate 2-deoxy-D-ribose 5-phosphate. In Cronobacter sakazakii (strain ATCC BAA-894) (Enterobacter sakazakii), this protein is Deoxyribose-phosphate aldolase.